A 568-amino-acid polypeptide reads, in one-letter code: Proline--tRNA ligase (568 aa).

This sequence belongs to the class-II aminoacyl-tRNA synthetase family. ProS type 1 subfamily. In terms of assembly, homodimer.

It is found in the cytoplasm. The enzyme catalyses tRNA(Pro) + L-proline + ATP = L-prolyl-tRNA(Pro) + AMP + diphosphate. Catalyzes the attachment of proline to tRNA(Pro) in a two-step reaction: proline is first activated by ATP to form Pro-AMP and then transferred to the acceptor end of tRNA(Pro). As ProRS can inadvertently accommodate and process non-cognate amino acids such as alanine and cysteine, to avoid such errors it has two additional distinct editing activities against alanine. One activity is designated as 'pretransfer' editing and involves the tRNA(Pro)-independent hydrolysis of activated Ala-AMP. The other activity is designated 'posttransfer' editing and involves deacylation of mischarged Ala-tRNA(Pro). The misacylated Cys-tRNA(Pro) is not edited by ProRS. The protein is Proline--tRNA ligase of Halothermothrix orenii (strain H 168 / OCM 544 / DSM 9562).